Consider the following 88-residue polypeptide: Small ribosomal subunit protein uS15 (88 aa).

Residues 1–12 show a composition bias toward basic and acidic residues; sequence MITQEEQQKIID. The segment at 1–24 is disordered; that stretch reads MITQEEQQKIIDRFGNGPNDTGTP.

It belongs to the universal ribosomal protein uS15 family. Part of the 30S ribosomal subunit. Forms a bridge to the 50S subunit in the 70S ribosome, contacting the 23S rRNA.

One of the primary rRNA binding proteins, it binds directly to 16S rRNA where it helps nucleate assembly of the platform of the 30S subunit by binding and bridging several RNA helices of the 16S rRNA. Its function is as follows. Forms an intersubunit bridge (bridge B4) with the 23S rRNA of the 50S subunit in the ribosome. The sequence is that of Small ribosomal subunit protein uS15 from Salinibacter ruber (strain DSM 13855 / M31).